The sequence spans 253 residues: Sulfate transporter CysZ (253 aa).

The next 4 helical transmembrane spans lie at 31-51 (FVIL…WWLF), 72-92 (LSYL…GYFF), 151-171 (IVLL…PVLW), and 222-242 (IPVL…AMWV).

The protein belongs to the CysZ family.

The protein localises to the cell inner membrane. Possibly involved in sulfate transport. Functionally, high affinity, high specificity proton-dependent sulfate transporter, which mediates sulfate uptake. Provides the sulfur source for the cysteine synthesis pathway. In Salmonella typhimurium (strain LT2 / SGSC1412 / ATCC 700720), this protein is Sulfate transporter CysZ.